The sequence spans 328 residues: RNA-binding protein KhpB (328 aa).

Residues 3 to 53 (VFTGSTVEEAIQKGLKELDIPRMKAHIKVISREKKGFLGLFGKKPAQVDIE) form a jag_N domain region. The interval 54–180 (AISETTVVKA…GLKVETNFDI (127 aa)) is linker. Thr89 bears the Phosphothreonine mark. In terms of domain architecture, KH spans 181-258 (EQVATEVMAY…SRTFYVTINV (78 aa)). The 66-residue stretch at 263–328 (EHRAEVLQTY…PNRYVVVDTE (66 aa)) folds into the R3H domain.

The protein belongs to the KhpB RNA-binding protein family. Interacts with KhpA; the 2 proteins colocalize throughout the cell cycle, with some increase at midcell in dividing cells. Interacts with StkP which phosphorylates it, interacts with MltG, MreC, RodZ and YidC2. In terms of processing, phosphorylated on Thr-89 by StkP; there is another poorly phosphorylated residue in the protein. Dephosphorylated by PhpP.

It localises to the cytoplasm. In terms of biological role, a probable RNA chaperone. Forms a complex with KhpA which binds to cellular RNA and controls its expression. Plays a role in peptidoglycan (PG) homeostasis and cell length regulation. Forms a complex with KhpA which presumably binds to about 170 cellular RNAs (mRNA, tRNA intergenic RNA and sRNAs); the proteins alone each bind the same set of RNAs. Suppresses the requirement for PBP2b (penA, a transpeptidase) in peripheral peptidoglycan (PG) synthesis. May function as a pleiotropic RNA chaperone controlling pneumococcal cell division, including PG homeostasis and regulating peripheral PG synthesis by the elongasome. In Streptococcus pneumoniae serotype 2 (strain D39 / NCTC 7466), this protein is RNA-binding protein KhpB.